A 273-amino-acid chain; its full sequence is Shikimate dehydrogenase (NADP(+)) (273 aa).

Shikimate-binding positions include 14–16 and Thr61; that span reads SKS. The active-site Proton acceptor is the Lys65. Asn86 and Asp102 together coordinate shikimate. NADP(+) contacts are provided by residues 126-130, 150-155, and Met213; these read GAGGA and NRTHAR. Tyr215 provides a ligand contact to shikimate. Residue Gly237 participates in NADP(+) binding.

The protein belongs to the shikimate dehydrogenase family. In terms of assembly, homodimer.

The catalysed reaction is shikimate + NADP(+) = 3-dehydroshikimate + NADPH + H(+). The protein operates within metabolic intermediate biosynthesis; chorismate biosynthesis; chorismate from D-erythrose 4-phosphate and phosphoenolpyruvate: step 4/7. Involved in the biosynthesis of the chorismate, which leads to the biosynthesis of aromatic amino acids. Catalyzes the reversible NADPH linked reduction of 3-dehydroshikimate (DHSA) to yield shikimate (SA). In Aeromonas hydrophila subsp. hydrophila (strain ATCC 7966 / DSM 30187 / BCRC 13018 / CCUG 14551 / JCM 1027 / KCTC 2358 / NCIMB 9240 / NCTC 8049), this protein is Shikimate dehydrogenase (NADP(+)).